A 33-amino-acid polypeptide reads, in one-letter code: Toxin Bcg III 25.52 (33 aa).

A disulfide bridge links Cys-6 with Cys-28.

The protein resides in the secreted. It is found in the nematocyst. This Bunodosoma cangicum (Sea anemone) protein is Toxin Bcg III 25.52.